Here is a 764-residue protein sequence, read N- to C-terminus: MRPADLLQLVLLLDLPRDLGGMGCSSPPCECHQEEDFRVTCKDIQRIPSLPPSTQTLKLIETHLRTIPSHAFSNLPNISRIYVSIDVTLQQLESHSFYNLSKVTHIEIRNTRNLTYIDPDALKELPLLKFLGIFNTGLKMFPDLTKVYSTDIFFILEITDNPYMTSIPVNAFQGLCNETLTLKLYNNGFTSVQGYAFNGTKLDAVYLNKNKYLTVIDKDAFGGVYSGPSLLDVSQTSVTALPSKGLEHLKELIARNTWTLKKLPLSLSFLHLTRADLSYPSHCCAFKNQKKIRGILESLMCNESSMQSLRQRKSVNALNSPLHQEYEENLGDSIVGYKEKSKFQDTHNNAHYYVFFEEQEDEIIGFGQELKNPQEETLQAFDSHYDYTICGDSEDMVCTPKSDEFNPCEDIMGYKFLRIVVWFVSLLALLGNVFVLLILLTSHYKLNVPRFLMCNLAFADFCMGMYLLLIASVDLYTHSEYYNHAIDWQTGPGCNTAGFFTVFASELSVYTLTVITLERWYAITFAMRLDRKIRLRHACAIMVGGWVCCFLLALLPLVGISSYAKVSICLPMDTETPLALAYIVFVLTLNIVAFVIVCCCYVKIYITVRNPQYNPGDKDTKIAKRMAVLIFTDFICMAPISFYALSAILNKPLITVSNSKILLVLFYPLNSCANPFLYAIFTKAFQRDVFILLSKFGICKRQAQAYRGQRVPPKNSTDIQVQKVTHEMRQGLHNMEDVYELIENSHLTPKKQGQISEEYMQTVL.

An N-terminal signal peptide occupies residues 1 to 20 (MRPADLLQLVLLLDLPRDLG). Residues 21–413 (GMGCSSPPCE…EFNPCEDIMG (393 aa)) are Extracellular-facing. A disulfide bond links Cys31 and Cys41. 3 N-linked (GlcNAc...) asparagine glycosylation sites follow: Asn77, Asn99, and Asn113. LRR repeat units lie at residues 100 to 124 (LSKV…ALKE), 125 to 150 (LPLL…VYST), 152 to 174 (IFFI…AFQG), 176 to 199 (CNET…AFNG), 200 to 223 (TKLD…AFGG), 227 to 248 (GPSL…GLEH), and 250 to 271 (KELI…SFLH). N-linked (GlcNAc...) asparagine glycosylation is found at Asn177 and Asn198. Asn302 carries an N-linked (GlcNAc...) asparagine glycan. Tyr385 bears the Sulfotyrosine mark. Residues 414–441 (YKFLRIVVWFVSLLALLGNVFVLLILLT) traverse the membrane as a helical segment. Topologically, residues 442-450 (SHYKLNVPR) are cytoplasmic. The chain crosses the membrane as a helical span at residues 451 to 473 (FLMCNLAFADFCMGMYLLLIASV). Residues 474–494 (DLYTHSEYYNHAIDWQTGPGC) lie on the Extracellular side of the membrane. An intrachain disulfide couples Cys494 to Cys569. Residues 495–517 (NTAGFFTVFASELSVYTLTVITL) form a helical membrane-spanning segment. At 518-537 (ERWYAITFAMRLDRKIRLRH) the chain is on the cytoplasmic side. Residues 538–560 (ACAIMVGGWVCCFLLALLPLVGI) traverse the membrane as a helical segment. Over 561-580 (SSYAKVSICLPMDTETPLAL) the chain is Extracellular. A helical membrane pass occupies residues 581 to 602 (AYIVFVLTLNIVAFVIVCCCYV). Topologically, residues 603–625 (KIYITVRNPQYNPGDKDTKIAKR) are cytoplasmic. Residues 626-649 (MAVLIFTDFICMAPISFYALSAIL) form a helical membrane-spanning segment. The Extracellular portion of the chain corresponds to 650 to 660 (NKPLITVSNSK). Residues 661 to 682 (ILLVLFYPLNSCANPFLYAIFT) form a helical membrane-spanning segment. At 683–764 (KAFQRDVFIL…ISEEYMQTVL (82 aa)) the chain is on the cytoplasmic side. The short motif at 762–764 (TVL) is the PDZ-binding element.

The protein belongs to the G-protein coupled receptor 1 family. FSH/LSH/TSH subfamily. Interacts with heterodimer GPHA2:GPHB5; this interaction stimulates cAMP production. Interacts (via the PDZ-binding motif) with SCRIB; regulates TSHR trafficking and function. In terms of processing, glycosylated. Sulfated. Sulfation on Tyr-385 plays a role in thyrotropin receptor binding and activation. Expressed in thyroide cells (at protein level). Expressed in the thyroid.

Its subcellular location is the cell membrane. The protein resides in the basolateral cell membrane. Functionally, receptor for the thyroid-stimulating hormone (TSH) or thyrotropin. Also acts as a receptor for the heterodimeric glycoprotein hormone (GPHA2:GPHB5) or thyrostimulin. The activity of this receptor is mediated by G proteins which activate adenylate cyclase. Plays a central role in controlling thyroid cell metabolism. The sequence is that of Thyrotropin receptor (TSHR) from Homo sapiens (Human).